Consider the following 198-residue polypeptide: MICOS complex subunit Mic26 (198 aa).

Residues 1-23 (MFKVIQRSVGPASLSLLTFRVYA) form the signal peptide. Asparagine 63 is a glycosylation site (N-linked (GlcNAc...) asparagine). The chain crosses the membrane as a helical span at residues 108–128 (PGFFPRLGVIGFAGFVGLLFA).

This sequence belongs to the apolipoprotein O/MICOS complex subunit Mic27 family. Component of the mitochondrial contact site and cristae organizing system (MICOS) complex, composed of at least MICOS10/MIC10, CHCHD3/MIC19, CHCHD6/MIC25, APOOL/MIC27, IMMT/MIC60, APOO/MIC23/MIC26 and MICOS13/MIC13. This complex was also known under the names MINOS or MitOS complex. The MICOS complex associates with mitochondrial outer membrane proteins SAMM50, MTX1 and MTX2 (together described as components of the mitochondrial outer membrane sorting assembly machinery (SAM) complex) and DNAJC11, mitochondrial inner membrane protein TMEM11 and with HSPA9. The MICOS and SAM complexes together with DNAJC11 are part of a large protein complex spanning both membranes termed the mitochondrial intermembrane space bridging (MIB) complex. Interacts with IMMT/MIC60. Interacts with MICOS10/MIC10 and APOOL/MIC27.

The protein localises to the mitochondrion inner membrane. It is found in the mitochondrion. The protein resides in the endoplasmic reticulum membrane. Its subcellular location is the golgi apparatus membrane. Its function is as follows. Component of the MICOS complex, a large protein complex of the mitochondrial inner membrane that plays crucial roles in the maintenance of crista junctions, inner membrane architecture, and formation of contact sites to the outer membrane. Plays a crucial role in crista junction formation and mitochondrial function. Can induce cardiac lipotoxicity by enhancing mitochondrial respiration and fatty acid metabolism in cardiac myoblasts. Promotes cholesterol efflux from macrophage cells. Detected in HDL, LDL and VLDL. Secreted by a microsomal triglyceride transfer protein (MTTP)-dependent mechanism, probably as a VLDL-associated protein that is subsequently transferred to HDL. The protein is MICOS complex subunit Mic26 (Apoo) of Mus musculus (Mouse).